Consider the following 323-residue polypeptide: Lipoyl synthase (323 aa).

The [4Fe-4S] cluster site is built by Cys-69, Cys-74, Cys-80, Cys-95, Cys-99, Cys-102, and Ser-310. A Radical SAM core domain is found at 81–299 (WTHGTLTVMI…EAWGYELGFR (219 aa)).

The protein belongs to the radical SAM superfamily. Lipoyl synthase family. The cofactor is [4Fe-4S] cluster.

The protein resides in the cytoplasm. It carries out the reaction [[Fe-S] cluster scaffold protein carrying a second [4Fe-4S](2+) cluster] + N(6)-octanoyl-L-lysyl-[protein] + 2 oxidized [2Fe-2S]-[ferredoxin] + 2 S-adenosyl-L-methionine + 4 H(+) = [[Fe-S] cluster scaffold protein] + N(6)-[(R)-dihydrolipoyl]-L-lysyl-[protein] + 4 Fe(3+) + 2 hydrogen sulfide + 2 5'-deoxyadenosine + 2 L-methionine + 2 reduced [2Fe-2S]-[ferredoxin]. Its pathway is protein modification; protein lipoylation via endogenous pathway; protein N(6)-(lipoyl)lysine from octanoyl-[acyl-carrier-protein]: step 2/2. In terms of biological role, catalyzes the radical-mediated insertion of two sulfur atoms into the C-6 and C-8 positions of the octanoyl moiety bound to the lipoyl domains of lipoate-dependent enzymes, thereby converting the octanoylated domains into lipoylated derivatives. This Thermus thermophilus (strain ATCC 27634 / DSM 579 / HB8) protein is Lipoyl synthase.